Reading from the N-terminus, the 318-residue chain is Rhomboid-related protein 4 (318 aa).

The Cytoplasmic segment spans residues 1 to 21 (MQRRSRGINTGLILLLSQIFH). Residues 22–42 (VGINNIPPVTLATLALNIWFF) traverse the membrane as a helical segment. At 43-106 (LNPQKPLYSS…RRLGSRWFAY (64 aa)) the chain is on the extracellular side. The chain crosses the membrane as a helical span at residues 107–127 (VITTFSVLTGVVYLLLQFAVA). Topologically, residues 128-137 (EFMDEPDFKR) are cytoplasmic. The chain crosses the membrane as a helical span at residues 138 to 154 (SCAVGFSGVLFALKVLN). Ser-144 acts as the Nucleophile in catalysis. The Extracellular portion of the chain corresponds to 155 to 179 (NHYCPGGFVNILGFPVPNRFACWVE). Residues 180-204 (LVAIHLFSPGTSFAGHQAGILVGLM) form a helical membrane-spanning segment. The active site involves His-195. Residues 205–318 (YTQGPLKKIM…RQRLHRFDSQ (114 aa)) are Cytoplasmic-facing. Residues 271–286 (SEEEQLERALQASLWD) are ubiquitin-binding domain (UBD). Positions 285 to 318 (WDRGHTRNSPPPYGFHLSPEEEMRRQRLHRFDSQ) are disordered. A compositionally biased stretch (basic and acidic residues) spans 302 to 318 (SPEEEMRRQRLHRFDSQ). Residues 303-318 (PEEEMRRQRLHRFDSQ) form a VCP/p97-interacting motif (VIM) region.

Belongs to the peptidase S54 family. In terms of assembly, interacts with BIK and STEAP3. Interacts (via C-terminal domain) with VCP. Interacts with ubiquitin and ubiquitinated proteins.

Its subcellular location is the endoplasmic reticulum membrane. It localises to the mitochondrion membrane. The enzyme catalyses Cleaves type-1 transmembrane domains using a catalytic dyad composed of serine and histidine that are contributed by different transmembrane domains.. With respect to regulation, inhibited by aprotinin. Functionally, intramembrane-cleaving serine protease that cleaves single transmembrane or multi-pass membrane proteins in the hydrophobic plane of the membrane, luminal loops and juxtamembrane regions. Involved in regulated intramembrane proteolysis and the subsequent release of functional polypeptides from their membrane anchors. Functional component of endoplasmic reticulum-associated degradation (ERAD) for misfolded membrane proteins. Required for the degradation process of some specific misfolded endoplasmic reticulum (ER) luminal proteins. Participates in the transfer of misfolded proteins from the ER to the cytosol, where they are destroyed by the proteasome in a ubiquitin-dependent manner. Functions in BIK, MPZ, PKD1, PTCRA, RHO, STEAP3 and TRAC processing. Involved in the regulation of exosomal secretion; inhibits the TSAP6-mediated secretion pathway. Involved in the regulation of apoptosis; modulates BIK-mediated apoptotic activity. Also plays a role in the regulation of spermatogenesis; inhibits apoptotic activity in spermatogonia. The protein is Rhomboid-related protein 4 (RHBDD1) of Pongo abelii (Sumatran orangutan).